Reading from the N-terminus, the 350-residue chain is Glycogenin-1 (350 aa).

An N-acetylthreonine modification is found at Thr2. Residues Leu9, Thr11, Asn12, and Tyr15 each contribute to the UDP site. The UDP-alpha-D-glucose site is built by Leu9, Thr11, Asn12, and Tyr15. Position 44 is a phosphoserine (Ser44). Arg77 lines the UDP pocket. UDP-alpha-D-glucose contacts are provided by Arg77, Lys86, Asp102, Ala103, Asp104, Asn133, Ser134, Asp160, Asp163, and Gln164. The UDP site is built by Asp102, Ala103, and Asp104. Residue Asp102 participates in Mn(2+) binding. Asp104 is a Mn(2+) binding site. O-linked (Glc...) tyrosine glycosylation is present at Tyr195. Positions 212, 215, and 218 each coordinate UDP. Position 212 (His212) interacts with Mn(2+). The UDP-alpha-D-glucose site is built by Gly215 and Lys218. The segment at 301–333 (SHLSLGEIPAMAQPFVSSEERKERWEQGQADYM) is interaction with GYS1.

It belongs to the glycosyltransferase 8 family. Glycogenin subfamily. Part of the GYS1-GYG1 complex, a heterooctamer composed of a tetramer of GYS1 and 2 dimers of GYG1, where each GYS1 protomer binds to one GYG1 subunit (via GYG1 C-terminus); the GYS1 tetramer may dissociate from GYG1 dimers to continue glycogen polymerization on its own. May also form a heterooctamer complex with GYS2 (via GYG1 C-terminus). Mn(2+) serves as cofactor. In terms of processing, self-glycosylated by the transfer of glucose residues from UDP-glucose to itself, forming an alpha-1,4-glycan of around 10 residues attached to Tyr-195. Post-translationally, phosphorylated. As to expression, highly expressed in skeletal muscle and heart, with lower levels in brain, lung, kidney and pancreas.

The protein resides in the cytoplasm. Its subcellular location is the nucleus. It carries out the reaction L-tyrosyl-[glycogenin] + UDP-alpha-D-glucose = alpha-D-glucosyl-L-tyrosyl-[glycogenin] + UDP + H(+). The catalysed reaction is [1,4-alpha-D-glucosyl](n)-L-tyrosyl-[glycogenin] + UDP-alpha-D-glucose = [1,4-alpha-D-glucosyl](n+1)-L-tyrosyl-[glycogenin] + UDP + H(+). It functions in the pathway glycan biosynthesis; glycogen biosynthesis. Inhibited by palladium ions. Its function is as follows. Glycogenin participates in the glycogen biosynthetic process along with glycogen synthase and glycogen branching enzyme. It catalyzes the formation of a short alpha (1,4)-glucosyl chain covalently attached via a glucose 1-O-tyrosyl linkage to internal tyrosine residues and these chains act as primers for the elongation reaction catalyzed by glycogen synthase. The polypeptide is Glycogenin-1 (Homo sapiens (Human)).